A 172-amino-acid polypeptide reads, in one-letter code: MGRGRSSSSSSIESSCKSNPFGVSSSNTRNLSTDLRLGLSFGSSSGQYYNGGDNHEYDGVGAAEEMMIMEEEEQNECNSVGSFYVKVNMEGVPIGRKIDLLSLNGYHDLITTLDYMFNASILWAEEEDMCSEKSHVLTYADKEGDWMMVGDVPWEMFLSSVRRLKISRAYHY.

Residues Met1–Ser18 are compositionally biased toward low complexity. The interval Met1 to Thr28 is disordered. The EAR-like (transcriptional repression) motif lies at Leu35–Leu39. The PB1 domain occupies Ser82–His171.

It belongs to the Aux/IAA family. In terms of assembly, homodimers and heterodimers.

Its subcellular location is the nucleus. Functionally, aux/IAA proteins are short-lived transcriptional factors that function as repressors of early auxin response genes at low auxin concentrations. Repression is thought to result from the interaction with auxin response factors (ARFs), proteins that bind to the auxin-responsive promoter element (AuxRE). Formation of heterodimers with ARF proteins may alter their ability to modulate early auxin response genes expression. This is Auxin-responsive protein IAA30 (IAA30) from Arabidopsis thaliana (Mouse-ear cress).